The sequence spans 487 residues: Serine carboxypeptidase-like 38 (487 aa).

A signal peptide spans 1-20 (MGKQQDWSVTACIFLSLSLA). 3 cysteine pairs are disulfide-bonded: Cys119/Cys368, Cys280/Cys290, and Cys315/Cys336. Ser215 is an active-site residue. The N-linked (GlcNAc...) asparagine glycan is linked to Asn233. Residues Asn317 and Asn357 are each glycosylated (N-linked (GlcNAc...) asparagine). The active site involves Asp407. Residues Asn423 and Asn449 are each glycosylated (N-linked (GlcNAc...) asparagine). Residue His460 is part of the active site.

This sequence belongs to the peptidase S10 family. As to expression, expressed in seedlings, roots, leaves, flowers and siliques.

The protein localises to the secreted. Functionally, probable carboxypeptidase. This chain is Serine carboxypeptidase-like 38 (SCPL38), found in Arabidopsis thaliana (Mouse-ear cress).